A 338-amino-acid chain; its full sequence is tRNA pseudouridine synthase D (338 aa).

Asp79 (nucleophile) is an active-site residue. The region spanning 154–303 (GVPNYFGEQR…EEAWRANILY (150 aa)) is the TRUD domain.

Belongs to the pseudouridine synthase TruD family.

The enzyme catalyses uridine(13) in tRNA = pseudouridine(13) in tRNA. In terms of biological role, responsible for synthesis of pseudouridine from uracil-13 in transfer RNAs. The chain is tRNA pseudouridine synthase D from Legionella pneumophila (strain Corby).